The chain runs to 305 residues: Glutaminase (305 aa).

7 residues coordinate substrate: Ser61, Asn113, Glu158, Asn165, Tyr189, Tyr241, and Val259.

The protein belongs to the glutaminase family. Homotetramer.

The catalysed reaction is L-glutamine + H2O = L-glutamate + NH4(+). This chain is Glutaminase, found in Alkaliphilus metalliredigens (strain QYMF).